The chain runs to 396 residues: MSEFIAENRGADAITRPNWSAVFSVAFCVACLIIVEFLPVSLLTPMAQDLGISEGVAGQSVTVTAFVAMFASLFITQTIQATDRRYVVILFAVLLTLSCLLVSFANSFSLLLIGRACLGLALGGFWAMSASLTMRLVPPRTVPKALSVIFGAVSIALVIAAPLGSFLGELIGWRNVFNAAAAMGVLCIFWIIKSLPSLPGEPSHQKQNTFRLLQRPGVMAGMIAIFMSFAGQFAFFTYIRPVYMNLAGFGVDGLTLVLLSFGIASFVGTSLSSFILKRSVKLALAGAPFVLALSALVLTLWGSDKIVATGVAIIWGLTFALIPVGWSTWITRSLADQAEKAGSIQVAVIQLANTCGAAIGGYALDNIGLTSPLMLSGTLMLLTALLVTAKVKMKKS.

The Cytoplasmic portion of the chain corresponds to 1–21 (MSEFIAENRGADAITRPNWSA). The chain crosses the membrane as a helical span at residues 22–42 (VFSVAFCVACLIIVEFLPVSL). Over 43–54 (LTPMAQDLGISE) the chain is Periplasmic. A helical transmembrane segment spans residues 55 to 75 (GVAGQSVTVTAFVAMFASLFI). Residues 76 to 85 (TQTIQATDRR) lie on the Cytoplasmic side of the membrane. The chain crosses the membrane as a helical span at residues 86–106 (YVVILFAVLLTLSCLLVSFAN). A topological domain (periplasmic) is located at residue serine 107. Residues 108 to 128 (FSLLLIGRACLGLALGGFWAM) traverse the membrane as a helical segment. Residues 129–147 (SASLTMRLVPPRTVPKALS) lie on the Cytoplasmic side of the membrane. Residues 148–168 (VIFGAVSIALVIAAPLGSFLG) traverse the membrane as a helical segment. The Periplasmic segment spans residues 169–175 (ELIGWRN). Residues 176-196 (VFNAAAAMGVLCIFWIIKSLP) traverse the membrane as a helical segment. At 197–215 (SLPGEPSHQKQNTFRLLQR) the chain is on the cytoplasmic side. Residues 216–236 (PGVMAGMIAIFMSFAGQFAFF) traverse the membrane as a helical segment. Topologically, residues 237-255 (TYIRPVYMNLAGFGVDGLT) are periplasmic. A helical membrane pass occupies residues 256 to 276 (LVLLSFGIASFVGTSLSSFIL). Topologically, residues 277–281 (KRSVK) are cytoplasmic. The chain crosses the membrane as a helical span at residues 282–302 (LALAGAPFVLALSALVLTLWG). Residues 303-305 (SDK) lie on the Periplasmic side of the membrane. A helical membrane pass occupies residues 306-326 (IVATGVAIIWGLTFALIPVGW). At 327–343 (STWITRSLADQAEKAGS) the chain is on the cytoplasmic side. A helical transmembrane segment spans residues 344–364 (IQVAVIQLANTCGAAIGGYAL). The Periplasmic segment spans residues 365 to 366 (DN). A helical membrane pass occupies residues 367–387 (IGLTSPLMLSGTLMLLTALLV). Residues 388–396 (TAKVKMKKS) lie on the Cytoplasmic side of the membrane.

It belongs to the major facilitator superfamily. DHA1 family. NepI (TC 2.A.1.2.26) subfamily.

The protein localises to the cell inner membrane. The catalysed reaction is inosine(in) + H(+)(out) = inosine(out) + H(+)(in). It catalyses the reaction guanosine(in) + H(+)(out) = guanosine(out) + H(+)(in). Functionally, involved in the efflux of purine ribonucleosides, such as inosine and guanosine. The sequence is that of Purine ribonucleoside efflux pump NepI from Escherichia coli O1:K1 / APEC.